The chain runs to 138 residues: Large ribosomal subunit protein bL17 (138 aa).

This sequence belongs to the bacterial ribosomal protein bL17 family. As to quaternary structure, part of the 50S ribosomal subunit. Contacts protein L32.

The protein is Large ribosomal subunit protein bL17 of Methylorubrum extorquens (strain CM4 / NCIMB 13688) (Methylobacterium extorquens).